A 201-amino-acid chain; its full sequence is Large ribosomal subunit protein uL4 (201 aa).

A disordered region spans residues 42–67 (GNSAQKTRSEVSGGGKKPWNQKGTGR).

Belongs to the universal ribosomal protein uL4 family. Part of the 50S ribosomal subunit.

One of the primary rRNA binding proteins, this protein initially binds near the 5'-end of the 23S rRNA. It is important during the early stages of 50S assembly. It makes multiple contacts with different domains of the 23S rRNA in the assembled 50S subunit and ribosome. In terms of biological role, forms part of the polypeptide exit tunnel. This is Large ribosomal subunit protein uL4 from Legionella pneumophila (strain Paris).